We begin with the raw amino-acid sequence, 819 residues long: Leucine--tRNA ligase (819 aa).

The 'HIGH' region signature appears at proline 40–histidine 51. Residues lysine 600–serine 604 carry the 'KMSKS' region motif. Position 603 (lysine 603) interacts with ATP.

The protein belongs to the class-I aminoacyl-tRNA synthetase family.

The protein localises to the cytoplasm. The enzyme catalyses tRNA(Leu) + L-leucine + ATP = L-leucyl-tRNA(Leu) + AMP + diphosphate. This chain is Leucine--tRNA ligase, found in Chlamydia muridarum (strain MoPn / Nigg).